The primary structure comprises 117 residues: MTRVKRGNVARKRRKKILKLAKGFRGSHSKLFRTANQQVMKALRNAYRDRRKRKRDFRRLWITRINAAARQEGMSYSKLTGQLKKANIEINRKMLAQLAVLDPAAFSEVVKVAATAK.

It belongs to the bacterial ribosomal protein bL20 family.

Binds directly to 23S ribosomal RNA and is necessary for the in vitro assembly process of the 50S ribosomal subunit. It is not involved in the protein synthesizing functions of that subunit. The sequence is that of Large ribosomal subunit protein bL20 (rplT) from Synechocystis sp. (strain ATCC 27184 / PCC 6803 / Kazusa).